The chain runs to 342 residues: Galactose mutarotase (342 aa).

N-acetylalanine is present on alanine 2. Serine 14 carries the post-translational modification Phosphoserine. Beta-D-galactose is bound by residues 81–82 and histidine 107; that span reads NR. Residue serine 124 is modified to Phosphoserine. Histidine 176 serves as the catalytic Proton donor. Residues 176-178, aspartate 243, glutamine 279, and glutamate 307 contribute to the beta-D-galactose site; that span reads HSY. Glutamate 307 functions as the Proton acceptor in the catalytic mechanism.

It belongs to the aldose epimerase family. Monomer.

The protein resides in the cytoplasm. It catalyses the reaction alpha-D-galactose = beta-D-galactose. The catalysed reaction is alpha-D-glucose = beta-D-glucose. Its pathway is carbohydrate metabolism; hexose metabolism. It functions in the pathway carbohydrate metabolism; galactose metabolism. Functionally, mutarotase that catalyzes the interconversion of beta-D-galactose and alpha-D-galactose during galactose metabolism. Beta-D-galactose is metabolized in the liver into glucose 1-phosphate, the primary metabolic fuel, by the action of four enzymes that constitute the Leloir pathway: GALM, GALK1 (galactokinase), GALT (galactose-1-phosphate uridylyltransferase) and GALE (UDP-galactose-4'-epimerase). Involved in the maintenance of the equilibrium between the beta- and alpha-anomers of galactose, therefore ensuring a sufficient supply of the alpha-anomer for GALK1. Also active on D-glucose although shows a preference for galactose over glucose. The protein is Galactose mutarotase of Homo sapiens (Human).